Here is a 601-residue protein sequence, read N- to C-terminus: Elongation factor 4 (601 aa).

Residues 6–188 (SHIRNFSIIA…QIVHRVPPPE (183 aa)) enclose the tr-type G domain. Residues 18–23 (DHGKST) and 135–138 (NKID) each bind GTP.

This sequence belongs to the TRAFAC class translation factor GTPase superfamily. Classic translation factor GTPase family. LepA subfamily.

It is found in the cell inner membrane. It catalyses the reaction GTP + H2O = GDP + phosphate + H(+). In terms of biological role, required for accurate and efficient protein synthesis under certain stress conditions. May act as a fidelity factor of the translation reaction, by catalyzing a one-codon backward translocation of tRNAs on improperly translocated ribosomes. Back-translocation proceeds from a post-translocation (POST) complex to a pre-translocation (PRE) complex, thus giving elongation factor G a second chance to translocate the tRNAs correctly. Binds to ribosomes in a GTP-dependent manner. This chain is Elongation factor 4, found in Anaeromyxobacter dehalogenans (strain 2CP-C).